We begin with the raw amino-acid sequence, 932 residues long: Serine/threonine-protein kinase PknD (932 aa).

The region spanning 4-291 (YDIVRIIGKG…ELKEDIESHL (288 aa)) is the Protein kinase domain. ATP-binding positions include 10–18 (IGKGGMGEV) and lysine 33. The active-site Proton acceptor is the aspartate 138.

This sequence belongs to the protein kinase superfamily. Ser/Thr protein kinase family. Post-translationally, autophosphorylated on serine and threonine residues.

It carries out the reaction L-seryl-[protein] + ATP = O-phospho-L-seryl-[protein] + ADP + H(+). The enzyme catalyses L-threonyl-[protein] + ATP = O-phospho-L-threonyl-[protein] + ADP + H(+). Together with the serine/threonine kinase Pkn1, may play a role in the specific interactions with host proteins during intracellular growth. The protein is Serine/threonine-protein kinase PknD of Chlamydia pneumoniae (Chlamydophila pneumoniae).